Reading from the N-terminus, the 212-residue chain is Orotate phosphoribosyltransferase (212 aa).

Residues R97, K101, H103, and 123–131 contribute to the 5-phospho-alpha-D-ribose 1-diphosphate site; that span reads EDLISTGGS. Residue S127 participates in orotate binding.

This sequence belongs to the purine/pyrimidine phosphoribosyltransferase family. PyrE subfamily. Homodimer. It depends on Mg(2+) as a cofactor.

The catalysed reaction is orotidine 5'-phosphate + diphosphate = orotate + 5-phospho-alpha-D-ribose 1-diphosphate. Its pathway is pyrimidine metabolism; UMP biosynthesis via de novo pathway; UMP from orotate: step 1/2. Catalyzes the transfer of a ribosyl phosphate group from 5-phosphoribose 1-diphosphate to orotate, leading to the formation of orotidine monophosphate (OMP). This Bacteroides fragilis (strain ATCC 25285 / DSM 2151 / CCUG 4856 / JCM 11019 / LMG 10263 / NCTC 9343 / Onslow / VPI 2553 / EN-2) protein is Orotate phosphoribosyltransferase.